Consider the following 180-residue polypeptide: Adenine phosphoribosyltransferase (180 aa).

Ala-2 carries the post-translational modification N-acetylalanine. Phosphoserine is present on residues Ser-4, Ser-15, and Ser-30. Residue Tyr-60 is modified to Phosphotyrosine. Ser-66 carries the phosphoserine modification. Lys-114 bears the N6-acetyllysine mark. Phosphothreonine is present on Thr-135.

Belongs to the purine/pyrimidine phosphoribosyltransferase family. Homodimer.

The protein resides in the cytoplasm. It catalyses the reaction AMP + diphosphate = 5-phospho-alpha-D-ribose 1-diphosphate + adenine. It participates in purine metabolism; AMP biosynthesis via salvage pathway; AMP from adenine: step 1/1. Its function is as follows. Catalyzes a salvage reaction resulting in the formation of AMP, that is energically less costly than de novo synthesis. This Homo sapiens (Human) protein is Adenine phosphoribosyltransferase.